Consider the following 230-residue polypeptide: Large ribosomal subunit protein uL1 (230 aa).

Belongs to the universal ribosomal protein uL1 family. Part of the 50S ribosomal subunit.

Its function is as follows. Binds directly to 23S rRNA. The L1 stalk is quite mobile in the ribosome, and is involved in E site tRNA release. Functionally, protein L1 is also a translational repressor protein, it controls the translation of the L11 operon by binding to its mRNA. The polypeptide is Large ribosomal subunit protein uL1 (Desulforapulum autotrophicum (strain ATCC 43914 / DSM 3382 / VKM B-1955 / HRM2) (Desulfobacterium autotrophicum)).